The following is a 348-amino-acid chain: Heat-inducible transcription repressor HrcA (348 aa).

The protein belongs to the HrcA family.

Negative regulator of class I heat shock genes (grpE-dnaK-dnaJ and groELS operons). Prevents heat-shock induction of these operons. The sequence is that of Heat-inducible transcription repressor HrcA from Lacticaseibacillus casei (strain BL23) (Lactobacillus casei).